We begin with the raw amino-acid sequence, 287 residues long: tRNA pseudouridine synthase B (287 aa).

Catalysis depends on Asp-38, which acts as the Nucleophile.

Belongs to the pseudouridine synthase TruB family. Type 1 subfamily.

It carries out the reaction uridine(55) in tRNA = pseudouridine(55) in tRNA. In terms of biological role, responsible for synthesis of pseudouridine from uracil-55 in the psi GC loop of transfer RNAs. The chain is tRNA pseudouridine synthase B from Fusobacterium nucleatum subsp. nucleatum (strain ATCC 25586 / DSM 15643 / BCRC 10681 / CIP 101130 / JCM 8532 / KCTC 2640 / LMG 13131 / VPI 4355).